We begin with the raw amino-acid sequence, 222 residues long: tRNA (guanine-N(1)-)-methyltransferase (222 aa).

S-adenosyl-L-methionine contacts are provided by residues Gly112 and 132–137 (IGDYVL).

Belongs to the RNA methyltransferase TrmD family. As to quaternary structure, homodimer.

It is found in the cytoplasm. The enzyme catalyses guanosine(37) in tRNA + S-adenosyl-L-methionine = N(1)-methylguanosine(37) in tRNA + S-adenosyl-L-homocysteine + H(+). In terms of biological role, specifically methylates guanosine-37 in various tRNAs. This is tRNA (guanine-N(1)-)-methyltransferase from Azobacteroides pseudotrichonymphae genomovar. CFP2.